A 731-amino-acid polypeptide reads, in one-letter code: MSGSRQAGSGSAGTSPGSSAASSVTSASSSLSSSPSPPSVAVSAAALVSGGVAQAAGSGGLGGPVRPVLVAPAVSGSGGGAVSTGLSRHSCAARPSAGVGGSSSSLGSGSRKRPLLAPLCNGLINSYEDKSNDFVCPICFDMIEEAYMTKCGHSFCYKCIHQSLEDNNRCPKCNYVVDNIDHLYPNFLVNELILKQKQRFEEKRFKLDHSVSSTNGHRWQIFQDWLGTDQDNLDLANVNLMLELLVQKKKQLEAESHAAQLQILMEFLKVARRNKREQLEQIQKELSVLEEDIKRVEEMSGLYSPVSEDSTVPQFEAPSPSHSSIIDSTEYSQPPGFSGSSQTKKQPWYNSTLASRRKRLTAHFEDLEQCYFSTRMSRISDDSRTASQLDEFQECLSKFTRYNSVRPLATLSYASDLYNGSSIVSSIEFDRDCDYFAIAGVTKKIKVYEYDTVIQDAVDIHYPENEMTCNSKISCISWSSYHKNLLASSDYEGTVILWDGFTGQRSKVYQEHEKRCWSVDFNLMDPKLLASGSDDAKVKLWSTNLDNSVASIEAKANVCCVKFSPSSRYHLAFGCADHCVHYYDLRNTKQPIMVFKGHRKAVSYAKFVSGEEIVSASTDSQLKLWNVGKPYCLRSFKGHINEKNFVGLASNGDYIACGSENNSLYLYYKGLSKTLLTFKFDTVKSVLDKDRKEDDTNEFVSAVCWRALPDGESNVLIAANSQGTIKVLELV.

A disordered region spans residues methionine 1–valine 40. The Nuclear localization signal 1 motif lies at glycine 109–arginine 113. An RING-type zinc finger spans residues cysteine 136 to asparagine 174. The short motif at lysine 195–lysine 206 is the Nuclear localization signal 2 element. Residues leucine 233–glycine 301 adopt a coiled-coil conformation. The Nuclear export signal motif lies at leucine 235–leucine 245. Residues proline 305–isoleucine 325 form a disordered region. 7 WD repeats span residues asparagine 419 to valine 458, threonine 468 to valine 508, glutamate 511 to serine 551, glutamate 553 to methionine 593, glycine 597 to serine 635, glycine 638 to threonine 677, and arginine 691 to glutamate 729. An interaction with TRIB1 region spans residues lysine 643–phenylalanine 645.

Belongs to the COP1 family. As to quaternary structure, homodimer. Homodimerization is mediated by the coiled coil domain. Component of the DCX DET1-COP1 ubiquitin ligase complex at least composed of RBX1, DET1, DDB1, CUL4A and COP1. Isoform 2 does not interact with CUL4A but still binds to RBX1, suggesting that the interaction may be mediated by another cullin protein. Isoform 1 and isoform 2 interact with CUL5 but not with CUL1, CUL2 not CUL3. Interacts with bZIP transcription factors JUN, JUNB and JUND but not with FOS, ATF2 nor XBP1. Interacts with p53 (TP53). Interacts with COPS6; this interaction stabilizes RFWD2 through reducing its auto-ubiquitination and decelerating its turnover rate. Interacts with SFN; this interaction leads to SFN degradation. Isoform 4 forms heterodimers with isoform 1, preventing its association with DET1. Interacts with p53/TP53 and MTA1. Interacts with TRIB1 (via C-terminus) and TRIB2. Post-translationally, autoubiquitinated. MTA1 destabilizes it by promoting its autoubiquitination. Ubiquitously expressed at low level. Expressed at higher level in testis, placenta, skeletal muscle and heart.

It localises to the nucleus speckle. It is found in the cytoplasm. It carries out the reaction S-ubiquitinyl-[E2 ubiquitin-conjugating enzyme]-L-cysteine + [acceptor protein]-L-lysine = [E2 ubiquitin-conjugating enzyme]-L-cysteine + N(6)-ubiquitinyl-[acceptor protein]-L-lysine.. The protein operates within protein modification; protein ubiquitination. Its activity is regulated as follows. TRIB1 competes with substrates for RFWD2 binding. E3 ubiquitin-protein ligase that mediates ubiquitination and subsequent proteasomal degradation of target proteins. E3 ubiquitin ligases accept ubiquitin from an E2 ubiquitin-conjugating enzyme in the form of a thioester and then directly transfers the ubiquitin to targeted substrates. Involved in JUN ubiquitination and degradation. Directly involved in p53 (TP53) ubiquitination and degradation, thereby abolishing p53-dependent transcription and apoptosis. Ubiquitinates p53 independently of MDM2 or RCHY1. Probably mediates E3 ubiquitin ligase activity by functioning as the essential RING domain subunit of larger E3 complexes. In contrast, it does not constitute the catalytic RING subunit in the DCX DET1-COP1 complex that negatively regulates JUN, the ubiquitin ligase activity being mediated by RBX1. Involved in 14-3-3 protein sigma/SFN ubiquitination and proteasomal degradation, leading to AKT activation and promotion of cell survival. Ubiquitinates MTA1 leading to its proteasomal degradation. Upon binding to TRIB1, ubiquitinates CEBPA, which lacks a canonical COP1-binding motif. The protein is E3 ubiquitin-protein ligase COP1 of Homo sapiens (Human).